We begin with the raw amino-acid sequence, 203 residues long: Holliday junction branch migration complex subunit RuvA (203 aa).

Residues Met-1 to Asn-64 form a domain I region. The interval Asn-65 to Pro-142 is domain II. Positions Ala-143 to Pro-154 are flexible linker. The domain III stretch occupies residues Ala-155 to Leu-203.

This sequence belongs to the RuvA family. In terms of assembly, homotetramer. Forms an RuvA(8)-RuvB(12)-Holliday junction (HJ) complex. HJ DNA is sandwiched between 2 RuvA tetramers; dsDNA enters through RuvA and exits via RuvB. An RuvB hexamer assembles on each DNA strand where it exits the tetramer. Each RuvB hexamer is contacted by two RuvA subunits (via domain III) on 2 adjacent RuvB subunits; this complex drives branch migration. In the full resolvosome a probable DNA-RuvA(4)-RuvB(12)-RuvC(2) complex forms which resolves the HJ.

The protein resides in the cytoplasm. The RuvA-RuvB-RuvC complex processes Holliday junction (HJ) DNA during genetic recombination and DNA repair, while the RuvA-RuvB complex plays an important role in the rescue of blocked DNA replication forks via replication fork reversal (RFR). RuvA specifically binds to HJ cruciform DNA, conferring on it an open structure. The RuvB hexamer acts as an ATP-dependent pump, pulling dsDNA into and through the RuvAB complex. HJ branch migration allows RuvC to scan DNA until it finds its consensus sequence, where it cleaves and resolves the cruciform DNA. This Cronobacter sakazakii (strain ATCC BAA-894) (Enterobacter sakazakii) protein is Holliday junction branch migration complex subunit RuvA.